A 553-amino-acid chain; its full sequence is uncharacterized protein (553 aa).

The next 5 membrane-spanning stretches (helical) occupy residues 13–30, 37–59, 69–91, 98–120, and 157–179; these read ALQA…GLGL, GISL…GLSI, SFGL…FSSF, LNML…SYTT, and TPAL…AVLL. RCK C-terminal domains are found at residues 190-273 and 281-365; these read LEVQ…LFGE and KEDI…VLGN. A run of 6 helical transmembrane segments spans residues 375 to 397, 402 to 424, 436 to 458, 468 to 490, 497 to 514, and 529 to 551; these read LVAV…SIPG, VRLG…GPRL, LMLR…GAHF, LLWI…FFAF, FGSV…PMAL, and AYAT…LLMF.

This sequence belongs to the AAE transporter (TC 2.A.81) family.

Its subcellular location is the cell membrane. This is an uncharacterized protein from Bacteroides fragilis (strain YCH46).